The primary structure comprises 218 residues: uncharacterized protein (218 aa).

This is an uncharacterized protein from Treponema pallidum (strain Nichols).